The primary structure comprises 631 residues: Shootin-1 (631 aa).

N-acetylmethionine is present on Met1. 2 positions are modified to phosphoserine: Ser3 and Ser4. The stretch at 7 to 353 forms a coiled coil; it reads EKQLQLITSL…RVNQSENSVP (347 aa). Residue Ser101 is modified to Phosphoserine; by PAK1. Ser249 is subject to Phosphoserine. Disordered regions lie at residues 343–404 and 417–508; these read KRVN…EVTD and IKKG…KSMP. Residues 352-369 are compositionally biased toward pro residues; that stretch reads VPPPPPPPPPLPPPPPNP. Phosphoserine is present on Ser375. Over residues 456 to 465 the composition is skewed to polar residues; the sequence is LNKSTSSRSL. Residue Ser473 is modified to Phosphoserine. At Thr487 the chain carries Phosphothreonine. The span at 490–505 shows a compositional bias: polar residues; that stretch reads ADSSSPTGILATSESK. A Phosphoserine modification is found at Ser494. Thr496 is subject to Phosphothreonine. Phosphoserine is present on residues Ser506 and Ser515. The segment at 530-631 is disordered; that stretch reads FNNPCPLTPE…KTGETDSSNC (102 aa). Thr537 bears the Phosphothreonine mark. Positions 590–602 are enriched in basic and acidic residues; that stretch reads PQTKDQAAEKDPT.

The protein belongs to the shootin family. Interacts with L1CAM; this interaction occurs at axonal growth cones. Interacts with actin filament retrograde flow; this interaction is enhanced in a netrin-1- and PAK1-dependent manner and promotes F-actin-substrate coupling and concomitant formation of traction forces at axonal growth cones. Interacts with RUFY3. Interacts with PFN2. Interacts (via N-terminus) with KIF20B; this interaction is direct and promotes the association of SHTN1 to microtubules in primary neurons. Associates with microtubule. In terms of processing, phosphorylated on Ser-101 and Ser-249 by PAK1 through a CDC42- and RAC1-dependent signaling pathway, which enhances its association with F-actin retrograde flow in filopodia and lamellipodia of axonal growth cones. Phosphorylation on Ser-101 and Ser-249 is increased by netrin-1. Expressed in hippocampal neurons.

It localises to the perikaryon. Its subcellular location is the cell projection. It is found in the axon. The protein resides in the growth cone. The protein localises to the cytoplasm. It localises to the cytoskeleton. Its subcellular location is the filopodium. It is found in the lamellipodium. Its function is as follows. Involved in the generation of internal asymmetric signals required for neuronal polarization and neurite outgrowth. Mediates netrin-1-induced F-actin-substrate coupling or 'clutch engagement' within the axon growth cone through activation of CDC42, RAC1 and PAK1-dependent signaling pathway, thereby converting the F-actin retrograde flow into traction forces, concomitantly with filopodium extension and axon outgrowth. Plays a role in cytoskeletal organization by regulating the subcellular localization of phosphoinositide 3-kinase (PI3K) activity at the axonal growth cone. Also plays a role in regenerative neurite outgrowth. In the developing cortex, cooperates with KIF20B to promote both the transition from the multipolar to the bipolar stage and the radial migration of cortical neurons from the ventricular zone toward the superficial layer of the neocortex. Involved in the accumulation of phosphatidylinositol 3,4,5-trisphosphate (PIP3) in the growth cone of primary hippocampal neurons. This Mus musculus (Mouse) protein is Shootin-1.